The sequence spans 216 residues: 3-isopropylmalate dehydratase small subunit (216 aa).

Belongs to the LeuD family. LeuD type 1 subfamily. In terms of assembly, heterodimer of LeuC and LeuD.

It catalyses the reaction (2R,3S)-3-isopropylmalate = (2S)-2-isopropylmalate. It participates in amino-acid biosynthesis; L-leucine biosynthesis; L-leucine from 3-methyl-2-oxobutanoate: step 2/4. Catalyzes the isomerization between 2-isopropylmalate and 3-isopropylmalate, via the formation of 2-isopropylmaleate. The chain is 3-isopropylmalate dehydratase small subunit from Psychrobacter sp. (strain PRwf-1).